Here is a 305-residue protein sequence, read N- to C-terminus: Ribonuclease BN (305 aa).

Positions 64, 66, 68, 69, 141, 212, and 270 each coordinate Zn(2+). D68 serves as the catalytic Proton acceptor.

Belongs to the RNase Z family. RNase BN subfamily. Homodimer. It depends on Zn(2+) as a cofactor.

Functionally, zinc phosphodiesterase, which has both exoribonuclease and endoribonuclease activities. This chain is Ribonuclease BN, found in Escherichia coli O6:K15:H31 (strain 536 / UPEC).